The following is a 397-amino-acid chain: Argininosuccinate synthase (397 aa).

9–17 (AYSGGLDTS) contacts ATP. Residue tyrosine 85 coordinates L-citrulline. Residue glycine 115 participates in ATP binding. 3 residues coordinate L-aspartate: threonine 117, asparagine 121, and aspartate 122. Residue asparagine 121 coordinates L-citrulline. Arginine 125, serine 173, glutamate 258, and tyrosine 270 together coordinate L-citrulline.

This sequence belongs to the argininosuccinate synthase family. Type 1 subfamily. As to quaternary structure, homotetramer.

The protein resides in the cytoplasm. It carries out the reaction L-citrulline + L-aspartate + ATP = 2-(N(omega)-L-arginino)succinate + AMP + diphosphate + H(+). It functions in the pathway amino-acid biosynthesis; L-arginine biosynthesis; L-arginine from L-ornithine and carbamoyl phosphate: step 2/3. This Streptococcus suis (strain 05ZYH33) protein is Argininosuccinate synthase.